The primary structure comprises 492 residues: 2-succinylbenzoate--CoA ligase (492 aa).

It belongs to the ATP-dependent AMP-binding enzyme family. MenE subfamily.

It catalyses the reaction 2-succinylbenzoate + ATP + CoA = 2-succinylbenzoyl-CoA + AMP + diphosphate. It functions in the pathway quinol/quinone metabolism; 1,4-dihydroxy-2-naphthoate biosynthesis; 1,4-dihydroxy-2-naphthoate from chorismate: step 5/7. Its pathway is quinol/quinone metabolism; menaquinone biosynthesis. Converts 2-succinylbenzoate (OSB) to 2-succinylbenzoyl-CoA (OSB-CoA). In Staphylococcus aureus (strain MSSA476), this protein is 2-succinylbenzoate--CoA ligase.